The primary structure comprises 417 residues: MSLCSSFNVFASYSPKPKTIFKDSKFISQFQVKSSPLASTFHTNESSTSLKYKRARLKPISSLDSGISEIATSPSFRNKSPKDINVLVVGSTGYIGRFVVKEMIKRGFNVIAVAREKSGIRGKNDKEETLKQLQGANVCFSDVTELDVLEKSIENLGFGVDVVVSCLASRNGGIKDSWKIDYEATKNSLVAGKKFGAKHFVLLSAICVQKPLLEFQRAKLKFEAELMDLAEQQDSSFTYSIVRPTAFFKSLGGQVEIVKDGKPYVMFGDGKLCACKPISEQDLAAFIADCVLEENKINQVLPIGGPGKALTPLEQGEILFKILGREPKFLKVPIEIMDFVIGVLDSIAKIFPSVGEAAEFGKIGRYYAAESMLILDPETGEYSEEKTPSYGKDTLEDFFAKVIREGMAGQELGEQFF.

A chloroplast-targeting transit peptide spans 1–49 (MSLCSSFNVFASYSPKPKTIFKDSKFISQFQVKSSPLASTFHTNESSTS).

Highly expressed in leaves, stems and flower buds. Detected in roots.

The protein localises to the plastid. It is found in the chloroplast. It carries out the reaction protochlorophyllide a + NADP(+) = 3,8-divinyl protochlorophyllide a + NADPH + H(+). Its pathway is porphyrin-containing compound metabolism; chlorophyll biosynthesis. Catalyzes the conversion of divinyl chlorophyllide to monovinyl chlorophyllide. Reduces the 8-vinyl group of the tetrapyrrole to an ethyl group using NADPH as the reductant. The best substrate is (3,8-divinyl)-chlorophyllide a (DV-Chlidea). Very low activity with (3,8-divinyl)-protochlorophyllide a (DV-Pchlidea) and (3,8-divinyl)-magnesium-protoporphyrin IX monomethyl ester (DV-MPE). No activity with (3,8-divinyl)-chlorophyllide b (DV-Chlideb), (3,8-divinyl)-magnesium-protoporphyrin IX (DV-Mg-Proto) and either (3,8-divinyl)-chlorophyll a (DV-Chla) or b (DV-Chlb). This is Divinyl chlorophyllide a 8-vinyl-reductase, chloroplastic (DVR) from Arabidopsis thaliana (Mouse-ear cress).